Reading from the N-terminus, the 626-residue chain is SHC-transforming protein 4 (626 aa).

The interval 1 to 185 (MRERSQDSQA…KQDGPPLQHL (185 aa)) is CH2. 2 disordered regions span residues 38-76 (ITSL…TVSS) and 119-182 (LQEN…GPPL). The segment covering 120–139 (QENQDQTPSRPASPESNLNR) has biased composition (polar residues). A PID domain is found at 186–369 (LGNGLNYCVR…LVDGAPEDRD (184 aa)). The CH1 stretch occupies residues 370-521 (HDYYNSIPGK…HIRQQLWDEE (152 aa)). Residue Tyr-422 is modified to Phosphotyrosine. The SH2 domain occupies 522-613 (CFHGKLSRGA…GSEVRLKQPI (92 aa)).

Interacts (via PID domain) with phosphorylated MUSK (via NPXY motif); undergoes tyrosine phosphorylation downstream of activated MUSK. Interacts with GRB2; the interaction is dependent of Tyr-422 phosphorylation and increased by EGF. Post-translationally, phosphorylated; the phosphorylation is enhanced by EGF. Phosphorylation at Tyr-422 is required for the interaction with GRB2. In terms of tissue distribution, expressed in both brain and skeletal muscle; widely expressed in brain namely olfactory bulb, cortex, hippocampus, striatum, thalamus, and brain stem (at protein level). Only expressed in melanomas. Weakly expressed in normal melanocytes and benign nevi. Highly expressed at the transition from radial growth phase to vertical growth phase and metastatic melanomas, when tumor cells acquire migratory competence and invasive potential.

It is found in the postsynaptic cell membrane. Functionally, activates both Ras-dependent and Ras-independent migratory pathways in melanomas. Contributes to the early phases of agrin-induced tyrosine phosphorylation of CHRNB1. In Mus musculus (Mouse), this protein is SHC-transforming protein 4 (Shc4).